The primary structure comprises 380 residues: Erythronate-4-phosphate dehydrogenase (380 aa).

Positions 45 and 66 each coordinate substrate. Residues 126–127 (QV), aspartate 146, threonine 174, 205–207 (ASR), and aspartate 231 each bind NAD(+). The active site involves arginine 207. The active site involves glutamate 236. The active-site Proton donor is the histidine 253. Glycine 256 is an NAD(+) binding site. Tyrosine 257 contributes to the substrate binding site.

Belongs to the D-isomer specific 2-hydroxyacid dehydrogenase family. PdxB subfamily. Homodimer.

Its subcellular location is the cytoplasm. It catalyses the reaction 4-phospho-D-erythronate + NAD(+) = (R)-3-hydroxy-2-oxo-4-phosphooxybutanoate + NADH + H(+). The protein operates within cofactor biosynthesis; pyridoxine 5'-phosphate biosynthesis; pyridoxine 5'-phosphate from D-erythrose 4-phosphate: step 2/5. Catalyzes the oxidation of erythronate-4-phosphate to 3-hydroxy-2-oxo-4-phosphonooxybutanoate. The protein is Erythronate-4-phosphate dehydrogenase of Azotobacter vinelandii (strain DJ / ATCC BAA-1303).